Here is a 448-residue protein sequence, read N- to C-terminus: Divalent metal cation transporter MntH (448 aa).

Residues 1–10 show a composition bias toward basic and acidic residues; it reads MKKDKTERTK. A disordered region spans residues 1 to 20; the sequence is MKKDKTERTKQSWRKAQNAP. 11 helical membrane passes run 41–61, 69–89, 117–137, 147–167, 176–196, 215–235, 270–290, 307–327, 363–383, 384–404, and 424–444; these read LFAFMGPGALIAVGYVDPGNW, SEFGYTLLSVILISNILAVLL, GFVLWILAELAIIATDIAEVI, FGIPLIWGVCITALDIFLVLF, IEVIVITLMVTILVCFGAEMV, IVTNPAMLYIALGILGATVMP, FSLTIALLINASILILAAAAF, LLNPTLGSSIASTVFAVALLA, VLAIVPAVIITALYGANGINE, LLIFSQVILSMQLSFAVIPLV, and IISWAVAIFIAVLNIYLLFYT.

This sequence belongs to the NRAMP family.

The protein resides in the cell membrane. Functionally, h(+)-stimulated, divalent metal cation uptake system. This chain is Divalent metal cation transporter MntH, found in Listeria monocytogenes serotype 4b (strain CLIP80459).